We begin with the raw amino-acid sequence, 225 residues long: Pyridoxine/pyridoxamine 5'-phosphate oxidase (225 aa).

Residues Arg-21 to Tyr-24 and Lys-79 contribute to the substrate site. FMN-binding positions include Arg-74 to Lys-79, Tyr-89 to Thr-90, Arg-95, and Lys-96. Substrate contacts are provided by Tyr-136, Arg-140, and Ser-144. FMN is bound by residues Gln-153–Ser-154 and Trp-197. Arg-203–His-205 provides a ligand contact to substrate. Arg-207 serves as a coordination point for FMN.

The protein belongs to the pyridoxamine 5'-phosphate oxidase family. As to quaternary structure, homodimer. FMN serves as cofactor.

It catalyses the reaction pyridoxamine 5'-phosphate + O2 + H2O = pyridoxal 5'-phosphate + H2O2 + NH4(+). The enzyme catalyses pyridoxine 5'-phosphate + O2 = pyridoxal 5'-phosphate + H2O2. Its pathway is cofactor metabolism; pyridoxal 5'-phosphate salvage; pyridoxal 5'-phosphate from pyridoxamine 5'-phosphate: step 1/1. It participates in cofactor metabolism; pyridoxal 5'-phosphate salvage; pyridoxal 5'-phosphate from pyridoxine 5'-phosphate: step 1/1. Functionally, catalyzes the oxidation of either pyridoxine 5'-phosphate (PNP) or pyridoxamine 5'-phosphate (PMP) into pyridoxal 5'-phosphate (PLP). This Paracidovorax citrulli (strain AAC00-1) (Acidovorax citrulli) protein is Pyridoxine/pyridoxamine 5'-phosphate oxidase.